We begin with the raw amino-acid sequence, 1031 residues long: Error-prone DNA polymerase (1031 aa).

This sequence belongs to the DNA polymerase type-C family. DnaE2 subfamily.

It is found in the cytoplasm. It catalyses the reaction DNA(n) + a 2'-deoxyribonucleoside 5'-triphosphate = DNA(n+1) + diphosphate. Its function is as follows. DNA polymerase involved in damage-induced mutagenesis and translesion synthesis (TLS). It is not the major replicative DNA polymerase. This chain is Error-prone DNA polymerase, found in Pseudomonas savastanoi pv. phaseolicola (strain 1448A / Race 6) (Pseudomonas syringae pv. phaseolicola (strain 1448A / Race 6)).